Reading from the N-terminus, the 811-residue chain is Leucine--tRNA ligase (811 aa).

Residues 38-49 (SYPSGSNLHAGH) carry the 'HIGH' region motif. Residues 570-574 (KMSKS) carry the 'KMSKS' region motif. Lys-573 serves as a coordination point for ATP.

The protein belongs to the class-I aminoacyl-tRNA synthetase family.

The protein localises to the cytoplasm. It catalyses the reaction tRNA(Leu) + L-leucine + ATP = L-leucyl-tRNA(Leu) + AMP + diphosphate. This Clostridium kluyveri (strain ATCC 8527 / DSM 555 / NBRC 12016 / NCIMB 10680 / K1) protein is Leucine--tRNA ligase.